Here is a 418-residue protein sequence, read N- to C-terminus: Aspartate aminotransferase, cytoplasmic (418 aa).

Ser-2 bears the N-acetylserine mark. The L-aspartate site is built by Gly-38, Trp-135, and Asn-188. Lys-255 carries the N6-(pyridoxal phosphate)lysine modification. Arg-387 contacts L-aspartate. Position 389 is a phosphoserine (Ser-389).

It belongs to the class-I pyridoxal-phosphate-dependent aminotransferase family. In terms of assembly, homodimer. Pyridoxal 5'-phosphate serves as cofactor.

The protein localises to the cytoplasm. It localises to the peroxisome. It catalyses the reaction L-aspartate + 2-oxoglutarate = oxaloacetate + L-glutamate. In terms of biological role, plays a key role in amino acid metabolism. The polypeptide is Aspartate aminotransferase, cytoplasmic (AAT2) (Saccharomyces cerevisiae (strain ATCC 204508 / S288c) (Baker's yeast)).